Consider the following 449-residue polypeptide: Tubulin alpha-2 chain (449 aa).

Position 11 (Gln-11) interacts with GTP. Lys-40 bears the N6-acetyllysine mark. GTP is bound by residues Ser-140, Gly-144, Thr-145, Thr-179, Asn-206, and Asn-228. Residue Glu-254 is part of the active site.

This sequence belongs to the tubulin family. As to quaternary structure, dimer of alpha and beta chains. A typical microtubule is a hollow water-filled tube with an outer diameter of 25 nm and an inner diameter of 15 nM. Alpha-beta heterodimers associate head-to-tail to form protofilaments running lengthwise along the microtubule wall with the beta-tubulin subunit facing the microtubule plus end conferring a structural polarity. Microtubules usually have 13 protofilaments but different protofilament numbers can be found in some organisms and specialized cells. Post-translationally, acetylation of alpha chains at Lys-40 stabilizes microtubules and affects affinity and processivity of microtubule motors. This modification has a role in multiple cellular functions, ranging from cell motility, cell cycle progression or cell differentiation to intracellular trafficking and signaling.

The protein localises to the cytoplasm. Its subcellular location is the cytoskeleton. It carries out the reaction GTP + H2O = GDP + phosphate + H(+). Functionally, tubulin is the major constituent of microtubules, a cylinder consisting of laterally associated linear protofilaments composed of alpha- and beta-tubulin heterodimers. Microtubules grow by the addition of GTP-tubulin dimers to the microtubule end, where a stabilizing cap forms. Below the cap, tubulin dimers are in GDP-bound state, owing to GTPase activity of alpha-tubulin. The polypeptide is Tubulin alpha-2 chain (Stylonychia lemnae (Ciliate)).